Here is a 188-residue protein sequence, read N- to C-terminus: Ribosome maturation factor RimM (188 aa).

One can recognise a PRC barrel domain in the interval Glu-98 to Val-171.

The protein belongs to the RimM family. As to quaternary structure, binds ribosomal protein uS19.

It localises to the cytoplasm. Its function is as follows. An accessory protein needed during the final step in the assembly of 30S ribosomal subunit, possibly for assembly of the head region. Essential for efficient processing of 16S rRNA. May be needed both before and after RbfA during the maturation of 16S rRNA. It has affinity for free ribosomal 30S subunits but not for 70S ribosomes. The protein is Ribosome maturation factor RimM of Myxococcus xanthus (strain DK1622).